The primary structure comprises 64 residues: Small ribosomal subunit protein eS17 (64 aa).

It belongs to the eukaryotic ribosomal protein eS17 family.

The chain is Small ribosomal subunit protein eS17 from Methanosarcina barkeri (strain Fusaro / DSM 804).